The following is a 410-amino-acid chain: Class E basic helix-loop-helix protein 41 (410 aa).

Residue K31 forms a Glycyl lysine isopeptide (Lys-Gly) (interchain with G-Cter in SUMO2) linkage. One can recognise a bHLH domain in the interval 44-99; sequence TYKLPHRLIEKKRRDRINECIAQLKDLLPEHLKLTTLGHLEKAVVLELTLKHLKAL. Residue K121 forms a Glycyl lysine isopeptide (Lys-Gly) (interchain with G-Cter in SUMO2) linkage. The Orange domain maps to 131 to 166; the sequence is FHSGFQTCAKEVLQYLARFESWTPREPRCAQLVSHL. Disordered regions lie at residues 209–255 and 360–410; these read IQRT…KRPK and GATA…KDAP. K240 is covalently cross-linked (Glycyl lysine isopeptide (Lys-Gly) (interchain with G-Cter in SUMO2)).

As to quaternary structure, homodimer. Heterodimer with BHLHE40/DEC1. Interacts with CIART. Interacts with BMAL1. Interacts with RXRA. Interacts with NR0B2 and HNF1A. As to expression, expressed in skeletal muscle, brain and lung.

It is found in the nucleus. Functionally, transcriptional repressor involved in the regulation of the circadian rhythm by negatively regulating the activity of the clock genes and clock-controlled genes. Acts as the negative limb of a novel autoregulatory feedback loop (DEC loop) which differs from the one formed by the PER and CRY transcriptional repressors (PER/CRY loop). Both these loops are interlocked as it represses the expression of PER1 and in turn is repressed by PER1/2 and CRY1/2. Represses the activity of the circadian transcriptional activator: CLOCK-BMAL1 heterodimer by competing for the binding to E-box elements (5'-CACGTG-3') found within the promoters of its target genes. Negatively regulates its own expression and the expression of DBP and BHLHE41/DEC2. Acts as a corepressor of RXR and the RXR-LXR heterodimers and represses the ligand-induced RXRA/B/G, NR1H3/LXRA, NR1H4 and VDR transactivation activity. Inhibits HNF1A-mediated transactivation of CYP1A2, CYP2E1 and CYP3A11. This Mus musculus (Mouse) protein is Class E basic helix-loop-helix protein 41 (Bhlhe41).